Here is a 900-residue protein sequence, read N- to C-terminus: Aldos-2-ulose dehydratase (900 aa).

A dehydratase domain region spans residues 1-433 (MYSKVFLKPH…NPSINVFLST (433 aa)). Residue Tyr35 participates in ascopyrone M binding. Mg(2+) is bound by residues Asp101, Thr103, Asn105, Phe107, and Asp109. Ascopyrone M-binding residues include Tyr116, Met120, His155, His215, His295, and His337. Catalysis depends on His155, which acts as the Proton acceptor. Positions 215, 295, 337, 343, 345, 347, 349, and 351 each coordinate Zn(2+). Positions 414, 419, and 627 each coordinate ascopyrone M. The interval 434-739 (GILAERLDEE…EFPGFETFST (306 aa)) is isomerase domain. Residues Ala627 and His630 each coordinate 1,5-anhydro-D-fructose. 3 residues coordinate Zn(2+): His630, His632, and Glu639. Glu639 and His641 together coordinate ascopyrone M. His641 serves as a coordination point for 1,5-anhydro-D-fructose. Position 709 (His709) interacts with Zn(2+). Trp726 is a binding site for ascopyrone M. Trp726 lines the 1,5-anhydro-D-fructose pocket.

In terms of assembly, homodimer. Requires Zn(2+) as cofactor.

It carries out the reaction 1,5-anhydro-D-fructose = microthecin + H2O. It catalyses the reaction 1,5-anhydro-D-fructose = ascopyrone M + H2O. The catalysed reaction is ascopyrone M = microthecin. The enzyme catalyses 2-dehydro-D-glucose = cortalcerone + H2O. It participates in carbohydrate metabolism; 1,5-anhydro-D-fructose degradation. Functionally, a bifunctional enzyme which catalyzes the dehydration of anhydrofructose into ascopyrone M, and the isomerization of ascopyrone M into microthecin. To a lesser extent, can also act on 2-dehydro-D-glucopyranose (D-glucosone), leading to the antibiotic cortalcerone. The chain is Aldos-2-ulose dehydratase from Phanerodontia chrysosporium (White-rot fungus).